A 275-amino-acid chain; its full sequence is 4-diphosphocytidyl-2-C-methyl-D-erythritol kinase (275 aa).

K9 is a catalytic residue. 90–100 (PVGGGLGGGSS) contacts ATP. Residue D132 is part of the active site.

The protein belongs to the GHMP kinase family. IspE subfamily.

The enzyme catalyses 4-CDP-2-C-methyl-D-erythritol + ATP = 4-CDP-2-C-methyl-D-erythritol 2-phosphate + ADP + H(+). The protein operates within isoprenoid biosynthesis; isopentenyl diphosphate biosynthesis via DXP pathway; isopentenyl diphosphate from 1-deoxy-D-xylulose 5-phosphate: step 3/6. In terms of biological role, catalyzes the phosphorylation of the position 2 hydroxy group of 4-diphosphocytidyl-2C-methyl-D-erythritol. This is 4-diphosphocytidyl-2-C-methyl-D-erythritol kinase from Sulfurihydrogenibium sp. (strain YO3AOP1).